A 238-amino-acid polypeptide reads, in one-letter code: Probable tetraspanin tspC (238 aa).

The Cytoplasmic segment spans residues 1–16; that stretch reads MVNTRDFLPKTTHYLK. The helical transmembrane segment at 17–37 threads the bilayer; that stretch reads VPIIGLNAILWLLGLVLIVVG. Residues 38 to 69 lie on the Extracellular side of the membrane; that stretch reads SVCISFFSNFKEFTKESGYKNALSNLTTSAPT. N-linked (GlcNAc...) asparagine glycosylation occurs at Asn62. Residues 70-90 traverse the membrane as a helical segment; that stretch reads GVLVIGIFFILLTLVGCFVAY. Topologically, residues 91–93 are cytoplasmic; sequence KEK. A helical transmembrane segment spans residues 94–114; sequence LVGLVLYTMLMLILLVVLIGI. The Extracellular segment spans residues 115–197; the sequence is GGKALTLDKE…GIFTKQVSSK (83 aa). 2 N-linked (GlcNAc...) asparagine glycosylation sites follow: Asn143 and Asn164. The chain crosses the membrane as a helical span at residues 198–218; sequence LVLVGIAGVVIGCIEFVAMAL. Residues 219–238 are Cytoplasmic-facing; the sequence is SLFLIIRICRSPRSRAYDQY.

This sequence belongs to the tetraspanin (TM4SF) family.

It localises to the membrane. This Dictyostelium discoideum (Social amoeba) protein is Probable tetraspanin tspC (tspC).